Consider the following 103-residue polypeptide: Large ribosomal subunit protein bL21 (103 aa).

Belongs to the bacterial ribosomal protein bL21 family. Part of the 50S ribosomal subunit. Contacts protein L20.

Functionally, this protein binds to 23S rRNA in the presence of protein L20. The chain is Large ribosomal subunit protein bL21 from Shewanella sediminis (strain HAW-EB3).